The chain runs to 672 residues: Spermatid perinuclear RNA-binding protein (672 aa).

Residues 5-363 (RSFANDDRHV…ALKRPFEDGL (359 aa)) enclose the DZF domain. Disordered stretches follow at residues 52 to 73 (TNKG…GENY) and 349 to 371 (GAGS…DPNK). Over residues 357–371 (RPFEDGLGDDKDPNK) the composition is skewed to basic and acidic residues. One can recognise a DRBM 1 domain in the interval 387 to 453 (DLMNALMRLN…AVKVLQAMGY (67 aa)). Residues 466–476 (SDEKSDNESKN) show a composition bias toward basic and acidic residues. The tract at residues 466-499 (SDEKSDNESKNETVSSNSSNNTGNSTTETSSTLE) is disordered. Residues 477–497 (ETVSSNSSNNTGNSTTETSST) are compositionally biased toward low complexity. Residues 510-576 (SGKNPVMELN…ALAALEKLFS (67 aa)) form the DRBM 2 domain. Asymmetric dimethylarginine occurs at positions 612 and 617.

As to quaternary structure, interacts with EIF2AK2. Associates with microtubules; it is unsure whether such interaction is direct or indirect.

Its subcellular location is the cytoplasm. Functionally, involved in spermatogenesis and sperm function. Plays a role in regulation of cell growth. Binds to double-stranded DNA and RNA. Binds most efficiently to poly(I:C) RNA than to poly(dI:dC) DNA. Binds also to single-stranded poly(G) RNA. Binds non-specifically to the mRNA PRM1 3'-UTR and adenovirus VA RNA. This is Spermatid perinuclear RNA-binding protein (STRBP) from Pongo abelii (Sumatran orangutan).